Here is a 418-residue protein sequence, read N- to C-terminus: AP-3 complex subunit mu-2 (418 aa).

The region spanning 176 to 417 is the MHD domain; the sequence is NNEAYFDVVE…MTKAGKFQVR (242 aa).

The protein belongs to the adaptor complexes medium subunit family. As to quaternary structure, adaptor protein complex 3 (AP-3) is a heterotetramer composed of two large adaptins (delta-type subunit AP3D1 and beta-type subunit AP3B1 or AP3B2), a medium adaptin (mu-type subunit AP3M1 or AP3M2) and a small adaptin (sigma-type subunit APS1 or AP3S2). AP-3 associates with the BLOC-1 complex.

The protein resides in the golgi apparatus. Its subcellular location is the cytoplasmic vesicle membrane. Its function is as follows. Component of the adaptor complexes which link clathrin to receptors in coated vesicles. Clathrin-associated protein complexes are believed to interact with the cytoplasmic tails of membrane proteins, leading to their selection and concentration. Ap47 is a subunit of the plasma membrane adaptor. In concert with the BLOC-1 complex, AP-3 is required to target cargos into vesicles assembled at cell bodies for delivery into neurites and nerve terminals. The polypeptide is AP-3 complex subunit mu-2 (Ap3m2) (Mus musculus (Mouse)).